Here is a 720-residue protein sequence, read N- to C-terminus: Calpain-12 (720 aa).

The Calpain catalytic domain occupies 45 to 341 (LFRDPCFPAG…FNTVQICSLS (297 aa)). Active-site residues include C105, H259, and N283. A domain III region spans residues 342–541 (PEVLGPSPAG…DDVISADLDA (200 aa)). Acidic residues predominate over residues 393-403 (DEEEDDDDEEG). The disordered stretch occupies residues 393–415 (DEEEDDDDEEGPWGGWGAAGARG). Residues 542-720 (LQAPYKPLEL…KQWSEVATFS (179 aa)) are domain IV. Residues 621–656 (GHLMSWQATFDKFDEDASGTMNSCELRLALTAAGFH) form the EF-hand domain. Residues D634, D636, S638, T640, and E645 each coordinate Ca(2+).

Belongs to the peptidase C2 family. Expression localized to the cortex of the hair follicle during the anagen phase of hair cycle.

Functionally, calcium-regulated non-lysosomal thiol-protease. This is Calpain-12 (Capn12) from Mus musculus (Mouse).